Reading from the N-terminus, the 107-residue chain is Phosphoribosyl-ATP pyrophosphatase (107 aa).

This sequence belongs to the PRA-PH family.

The protein resides in the cytoplasm. It catalyses the reaction 1-(5-phospho-beta-D-ribosyl)-ATP + H2O = 1-(5-phospho-beta-D-ribosyl)-5'-AMP + diphosphate + H(+). It participates in amino-acid biosynthesis; L-histidine biosynthesis; L-histidine from 5-phospho-alpha-D-ribose 1-diphosphate: step 2/9. The protein is Phosphoribosyl-ATP pyrophosphatase (hisE) of Caulobacter vibrioides (strain ATCC 19089 / CIP 103742 / CB 15) (Caulobacter crescentus).